The chain runs to 330 residues: Aspartate--ammonia ligase (330 aa).

Belongs to the class-II aminoacyl-tRNA synthetase family. AsnA subfamily.

Its subcellular location is the cytoplasm. It catalyses the reaction L-aspartate + NH4(+) + ATP = L-asparagine + AMP + diphosphate + H(+). The protein operates within amino-acid biosynthesis; L-asparagine biosynthesis; L-asparagine from L-aspartate (ammonia route): step 1/1. This Streptococcus thermophilus (strain CNRZ 1066) protein is Aspartate--ammonia ligase.